The sequence spans 132 residues: uncharacterized protein (132 aa).

2 helical membrane passes run 44 to 64 (FMSF…FTFI) and 75 to 95 (IAMI…AMLF).

The protein localises to the cytoplasm. The protein resides in the membrane. This is an uncharacterized protein from Schizosaccharomyces pombe (strain 972 / ATCC 24843) (Fission yeast).